The following is a 286-amino-acid chain: ATP synthase gamma chain (286 aa).

Belongs to the ATPase gamma chain family. In terms of assembly, F-type ATPases have 2 components, CF(1) - the catalytic core - and CF(0) - the membrane proton channel. CF(1) has five subunits: alpha(3), beta(3), gamma(1), delta(1), epsilon(1). CF(0) has three main subunits: a, b and c.

The protein resides in the cell inner membrane. Its function is as follows. Produces ATP from ADP in the presence of a proton gradient across the membrane. The gamma chain is believed to be important in regulating ATPase activity and the flow of protons through the CF(0) complex. The sequence is that of ATP synthase gamma chain from Shewanella woodyi (strain ATCC 51908 / MS32).